A 324-amino-acid chain; its full sequence is Transcriptional regulator protein Pur-beta (324 aa).

The disordered stretch occupies residues 1-47 (MADGDSGSERGGGGGGGGGPGGFQPAPRGGGGGGGGPGGEQETQELA). At Ala2 the chain carries N-acetylalanine. A phosphoserine mark is found at Ser6 and Ser8. Residues 9 to 39 (ERGGGGGGGGGPGGFQPAPRGGGGGGGGPGG) are compositionally biased toward gly residues. The residue at position 28 (Arg28) is an Omega-N-methylarginine. Residues 37–263 (PGGEQETQEL…GVFLRVSEVK (227 aa)) form a DNA-binding region. Residue Thr43 is modified to Phosphothreonine. Ser113 is subject to Phosphoserine. Residue Arg164 is modified to Omega-N-methylarginine. Lys279 is modified (N6-acetyllysine). Positions 297-307 (RQRDKLYERRG) are enriched in basic and acidic residues. The interval 297–324 (RQRDKLYERRGGGSGGGDESEGEEVDED) is disordered. The residue at position 306 (Arg306) is an Omega-N-methylarginine. Phosphoserine is present on residues Ser310 and Ser316. The segment covering 314–324 (DESEGEEVDED) has biased composition (acidic residues).

It belongs to the PUR DNA-binding protein family. Homodimer, heterodimer with PURA and heterotrimer with PURA and YBX1/Y-box protein 1. Interacts with MYOCD and SRF.

The protein resides in the nucleus. Its function is as follows. Transcriptional regulator which can act as an activator or a repressor. Represses the transcription of ACTA2 in fibroblasts and smooth muscle cells via its ability to interact with the purine-rich strand of a MCAT-containing element in the 5' flanking region of the gene. Represses the transcription of MYOCD, capable of repressing all isoforms of MYOCD but the magnitude of the repressive effects is most notable for the SMC-specific isoforms. Promotes hepatic glucose production by activating the transcription of ADCY6, leading to cAMP accumulation, increased PKA activity, CREB activation, and increased transcription of PCK1 and G6PC genes. Has capacity to bind repeated elements in single-stranded DNA such as the purine-rich single strand of the PUR element located upstream of the MYC gene. Participates in transcriptional and translational regulation of alpha-MHC expression in cardiac myocytes by binding to the purine-rich negative regulatory (PNR) element. Modulates constitutive liver galectin-3 gene transcription by binding to its promoter. May play a role in the dendritic transport of a subset of mRNAs. This chain is Transcriptional regulator protein Pur-beta (Purb), found in Mus musculus (Mouse).